We begin with the raw amino-acid sequence, 128 residues long: UPF0102 protein Rfer_3873 (128 aa).

The span at methionine 1 to glutamine 15 shows a compositional bias: polar residues. A disordered region spans residues methionine 1–alanine 20.

It belongs to the UPF0102 family.

This is UPF0102 protein Rfer_3873 from Albidiferax ferrireducens (strain ATCC BAA-621 / DSM 15236 / T118) (Rhodoferax ferrireducens).